The sequence spans 831 residues: MTDNQEIKPKKLTLGNSKLSLNKSFDSLTGAQSFVNANSKTLVEVRKSSTGSATTLSLNKERNSLDQTVIDANKEEFNRRLSILKKAAEQSKLNDPSKISTLSKLASINQSANSRIEPLETDKEVEPKQQNTEENKVEVSAKIVQDDEDIPSQIPKKKEDIFVKSPLVGMRTRYGIESEKELDKTADRKIVAPKIKLEEPKKFKKADLFNMLSDDESGSGRTRSLASIKRAREKEKRKLVSQAPEKVYREVTIPEVIGVGDLANAMSERVADVIKELMKLGILANASQTIDADTAELVATNLGHTVKRVQESDVENVLISDDKVEDLRTRAPVVTVMGHVDHGKTSLLDALKSTDIAAGELGGITQHIGAYRVTLADGRAITFIDTPGHEAFSEMRSRGAKVTDIVIIVVAADDGIKTQTVEAINHAKAAGVPIIVAINKIDKPDIDIERVKNELYVHEIIGEEAGGDVMVIPISALKKINLDKLEEAILLIAEMQDLKANPFGAAAGVVIESKIEQGRGTLTTILVQRGTLRNSDIIIAGTSYGKVKKMINDKGLEILEATPSVPVEIQGLNEVPFAGDKFNVVQNEKQAKDIAEYRMRLAKEKKISIAPRSSLEDLFLKASGNSKIKELPLIIKGDVQGSVEAISGSLLKLPSDEIKLRILHSGVGPITESDLSLAHASSAIIVGFNVRAGANALTAAEKEKVDIRYYSIIYHLIDDIKAIMSGMLDPIVREQYIGSAEIRQIFNIIKVGKIAGSYVTKGIIKKRAGVRLLRDNVVIHEGKFKTLKRFKDEVKEVREGYECGIAFENYEDIREGDTVEVFELIQEQRQL.

Residues 329–499 enclose the tr-type G domain; sequence TRAPVVTVMG…LLIAEMQDLK (171 aa). Residues 338–345 form a G1 region; it reads GHVDHGKT. 338-345 is a binding site for GTP; it reads GHVDHGKT. The tract at residues 363 to 367 is G2; the sequence is GITQH. Positions 385–388 are G3; it reads DTPG. Residues 385-389 and 439-442 contribute to the GTP site; these read DTPGH and NKID. The interval 439-442 is G4; the sequence is NKID. The interval 475–477 is G5; the sequence is SAL.

This sequence belongs to the TRAFAC class translation factor GTPase superfamily. Classic translation factor GTPase family. IF-2 subfamily.

It is found in the cytoplasm. Its function is as follows. One of the essential components for the initiation of protein synthesis. Protects formylmethionyl-tRNA from spontaneous hydrolysis and promotes its binding to the 30S ribosomal subunits. Also involved in the hydrolysis of GTP during the formation of the 70S ribosomal complex. In Rickettsia massiliae (strain Mtu5), this protein is Translation initiation factor IF-2.